We begin with the raw amino-acid sequence, 262 residues long: Lens fiber major intrinsic protein (262 aa).

Residues M1–F9 are Cytoplasmic-facing. The chain crosses the membrane as a helical span at residues W10–G29. Residues A30 to V41 lie on the Extracellular side of the membrane. A helical membrane pass occupies residues L42–L59. Residues G60 to H61 are Cytoplasmic-facing. An intramembrane region (discontinuously helical) is located at residues V62–L77. An NPA 1 motif is present at residues N68–A70. The Cytoplasmic portion of the chain corresponds to A78–S82. Residues L83–G106 traverse the membrane as a helical segment. Topologically, residues V107–P127 are extracellular. The chain crosses the membrane as a helical span at residues G128–S148. Residues F149–R156 lie on the Cytoplasmic side of the membrane. A helical membrane pass occupies residues P157–G175. At I176–F178 the chain is on the extracellular side. An intramembrane region (discontinuously helical) is located at residues T179 to V193. The NPA 2 motif lies at N184–A186. Topologically, residues I194–N200 are extracellular. A helical transmembrane segment spans residues H201–A222. Over L223 to L262 the chain is Cytoplasmic. Positions A227–L237 are interaction with CALM. A disordered region spans residues E240 to L262. A compositionally biased stretch (pro residues) spans A243–E253.

This sequence belongs to the MIP/aquaporin (TC 1.A.8) family. As to quaternary structure, homotetramer; each monomer provides an independent water pore. Two homotetramers on opposing membranes can dimerize, forming a cell-cell junction. Interacts with CALM; the calcium-calmodulin/CALM complex interacts with the cytoplasmic domains of two aquaporins, leading to channel closure. During early stages of lens development, interacts through its C-terminal region with Cx56 and GJA8/Cx45.6. As to expression, major component of lens fiber gap junctions.

Its subcellular location is the cell membrane. The protein resides in the cell junction. It carries out the reaction H2O(in) = H2O(out). With respect to regulation, the water channel activity is inhibited by calcium through calmodulin/CALM. Its function is as follows. Aquaporins form homotetrameric transmembrane channels, with each monomer independently mediating water transport across the plasma membrane along its osmotic gradient. Specifically expressed in lens fiber cells, this aquaporin is crucial for maintaining lens water homeostasis and transparency. Beyond water permeability, it also acts as a cell-to-cell adhesion molecule, forming thin junctions between lens fiber cells that are essential for maintaining the ordered structure and transparency of the lens. The protein is Lens fiber major intrinsic protein of Gallus gallus (Chicken).